A 468-amino-acid chain; its full sequence is ATP synthase subunit beta (468 aa).

ATP is bound at residue 155 to 162 (GGAGVGKT).

Belongs to the ATPase alpha/beta chains family. F-type ATPases have 2 components, CF(1) - the catalytic core - and CF(0) - the membrane proton channel. CF(1) has five subunits: alpha(3), beta(3), gamma(1), delta(1), epsilon(1). CF(0) has three main subunits: a(1), b(2) and c(9-12). The alpha and beta chains form an alternating ring which encloses part of the gamma chain. CF(1) is attached to CF(0) by a central stalk formed by the gamma and epsilon chains, while a peripheral stalk is formed by the delta and b chains.

The protein resides in the cell membrane. The enzyme catalyses ATP + H2O + 4 H(+)(in) = ADP + phosphate + 5 H(+)(out). Functionally, produces ATP from ADP in the presence of a proton gradient across the membrane. The catalytic sites are hosted primarily by the beta subunits. This Streptococcus gordonii (strain Challis / ATCC 35105 / BCRC 15272 / CH1 / DL1 / V288) protein is ATP synthase subunit beta.